The primary structure comprises 392 residues: uncharacterized protein (392 aa).

The protein belongs to the glycosyltransferase 2 family.

This is an uncharacterized protein from Bacillus subtilis (strain 168).